Consider the following 25-residue polypeptide: Caerin-1.19 (25 aa).

L25 carries the post-translational modification Leucine amide.

This sequence belongs to the frog skin active peptide (FSAP) family. Caerin subfamily. As to expression, expressed by the skin dorsal glands.

The protein localises to the secreted. Functionally, caerin-1.19 shows significant activity against Gram-positive organisms, but is less effective against Gram-negative organisms. This Ranoidea gracilenta (Dainty green tree frog) protein is Caerin-1.19.